We begin with the raw amino-acid sequence, 125 residues long: Apolipoprotein C-IV (125 aa).

A signal peptide spans 1 to 27; sequence MSLLRHSLQALPALCLCVLVLACIGAC.

Belongs to the apolipoprotein C4 family.

It localises to the secreted. Its function is as follows. May participate in lipoprotein metabolism. In Ateles geoffroyi (Black-handed spider monkey), this protein is Apolipoprotein C-IV (APOC4).